The chain runs to 264 residues: Glutamate racemase (264 aa).

Residues 10–11 and 42–43 contribute to the substrate site; these read DS and YG. Cysteine 73 functions as the Proton donor/acceptor in the catalytic mechanism. 74–75 is a binding site for substrate; sequence NT. Residue cysteine 183 is the Proton donor/acceptor of the active site. 184–185 is a binding site for substrate; the sequence is TH.

The protein belongs to the aspartate/glutamate racemases family.

It carries out the reaction L-glutamate = D-glutamate. It functions in the pathway cell wall biogenesis; peptidoglycan biosynthesis. In terms of biological role, provides the (R)-glutamate required for cell wall biosynthesis. In Streptococcus agalactiae serotype Ia (strain ATCC 27591 / A909 / CDC SS700), this protein is Glutamate racemase.